A 435-amino-acid polypeptide reads, in one-letter code: MAYPVVAIVGRPNVGKSTLFNRIAGERISIVEDTPGVTRDRIYSRAEWLGTEFRMIDTGGIDMGDEPFLTQITQQAEIAIDEADVIVFIVSAPEGITDADEKVAKILYRADKPVILAVNKADNPEVRESIYDFYSLGFGDPYPVSGVHGLGLGDLLDAVVKEFPEKDGAPKDDSIRFSLIGRPNVGKSSLVNAMLGEERVIVSNIAGTTRDAIDTKFVADDTKFTMVDTAGIRKRGKVYENTERYSVMRAMRAIDDSDVVLVVLNAEEGIREQDKRVAGYAHEAGRGIIILVNKWDTLKKDNHTLTDFQNLIRIEFQYLSYAPIIFVSAKTGQRLEQLPEMIKRVADNHNKRVQSATLNDVVMDAIALNPTPSDNGKRLRVYYATQVAIAPPTFVVFVNDPKMMHFSYERFLENQIREHFDFEGTPIHLIERARK.

EngA-type G domains are found at residues 4–167 and 175–350; these read PVVA…PEKD and IRFS…DNHN. Residues 10 to 17, 57 to 61, 119 to 122, 181 to 188, 228 to 232, and 293 to 296 contribute to the GTP site; these read GRPNVGKS, DTGGI, NKAD, DTAGI, and NKWD. Residues 351-435 enclose the KH-like domain; sequence KRVQSATLND…PIHLIERARK (85 aa).

The protein belongs to the TRAFAC class TrmE-Era-EngA-EngB-Septin-like GTPase superfamily. EngA (Der) GTPase family. As to quaternary structure, associates with the 50S ribosomal subunit.

Functionally, GTPase that plays an essential role in the late steps of ribosome biogenesis. The chain is GTPase Der from Levilactobacillus brevis (strain ATCC 367 / BCRC 12310 / CIP 105137 / JCM 1170 / LMG 11437 / NCIMB 947 / NCTC 947) (Lactobacillus brevis).